The following is a 410-amino-acid chain: Regulator of microtubule dynamics protein 2 (410 aa).

A helical membrane pass occupies residues 9-28; that stretch reads LILGIMVGTAGISLLLLWYH. A Phosphoserine modification is found at S51. A coiled-coil region spans residues 68 to 110; the sequence is FQERQLQILEKLNELLTNMEELKEEIRFLKEAIPKLEEYIQDE. S121 bears the Phosphoserine mark. Residues 122 to 131 are compositionally biased toward basic residues; it reads PQHRARKRRL. The disordered stretch occupies residues 122–164; it reads PQHRARKRRLPTIQSSATSNSSEEAESEGGYITANTDTEEQSF. Residue T139 is modified to Phosphothreonine. Y152 is modified (phosphotyrosine). Phosphothreonine occurs at positions 154 and 157.

The protein belongs to the RMDN family. In terms of assembly, interacts with microtubules.

Its subcellular location is the membrane. The protein localises to the cytoplasm. The protein resides in the cytoskeleton. It localises to the spindle. It is found in the spindle pole. In Homo sapiens (Human), this protein is Regulator of microtubule dynamics protein 2 (RMDN2).